A 2206-amino-acid chain; its full sequence is MGAQVSSQKVGAHENSNRAYGGSTINYTTINYYKDSASNAASKQDYSQDPSKFTEPLKDVLIKTAPALNSPNVEACGYSDRVLQLTLGNSTITTQEAANSVVAYGRWPEFIRDDEANPVDQPTEPDVATSRFYTLDTVMWGKESRGWWWKLPDALRDMGLFGQNMYYHYLGRSGYTVHVQCNASKFHQGSLGVFAIPEFCLAGDSDTQRYTSYANANPGEKGGKFYAQFNKDTAVTSPKREFCPVDYLLGCGVLIGNAFVFPHQIINLRTNNSATLVLPYVNALSIDSMVKHNNWGIAILPLSPLDFAQDSSVEIPITVTIAPMCSEFNGLRNVTAPKLQGLPVLNTPGSNQYLTSDNHQSPCAIPEFDVTPPIDIPGEVKNVMELAEIDTMIPLNLENTKRNTMDMYRVRLSDSANLSGPILCLSLSPAADPRLSHTMLGEVLNYYTHWAGSLKFTFLFCGSMMATGKLLVAYAPPGAQPPTSRKEAMLGTHVIWDLGLQSSCTMVVPWISNVTYRQTTQDSFTEGGYISMFYQTRIVVPLSTPKAMDMLGFVSACNDFSVRLLRDTTHISQAAMPQGVDDLITEVAQNALALSLPKPQSNLPDTKASGPAHSKEVPTLTAVETGATNPLVPSDTVQTRHVIQQRSRSESTIESFFARGACVAIIEVDNEQPATNVQKLFATWRITYKDTVQLRRKLEFFTYSRFDMEFTFVVTANFTNSNNGHALNQVYQIMYIPPGAPTPKSWDDYTWQTSSNPSIFYTYGAAPARISVPYVGLANAYSHFYDGFAKVPLKSDANDQVGDSLYSAMAVDDFGVLAIRVVNDHNPTKVTSKVRVYMKPKHVRVWCPRPPRAVPYYGPGVDYKDGLAPLSEKGLTTYGFGHQNKAVYTAGYKICNYHLATQEDLQNAVSVMWNRDLLVTESKAQGIDSIARCNCSTGVYYCESRSRYYPVSFVGPTFQYMEANDYYPARYQSHMLIGHGFASPGDCGGILRCQHGVIGIITAGGEGLVAFSDIRDLYAYEEEAMEQGISSYVESLGAAFGSGFTQQIGDKIIELTGMVTSTITEKLLKNLIKIVSSLVIITRNYDDTTTVLATLALLGCDVSPWQWLKKKACDILEIPYVMRQGDSWLKKFTEACNAAKGLEWVSNKISKFIDWLREKIIPQARDKLEFVTKLKQLEMLENQIATIHQSCPSQEHQEILFNNVRWLSIQSKRFAPLYALEAKRIQKLEHTINNYIQFKSKHRIEPVCLLVHGSPGTGKSVATNLIARAIAEKENTSTYSLPPDPSHFDGYKQQGVVIMDDLNQNPDGADMKLFCQMVSTVEFIPPMASLEEKGILFTSNYVLASTNSSRITPPTVAHSDALARRFAFDMDIQVMSEYSRDGKLNMTMATEMCKNCHQPANFKRCCPLVCGKAIQLMDKSSRVRYSIDQITTMIVNEKNRRSNIGNCMEALFQGPLQYKDLKIDIKTTPPPECINDLLQAVDSQEVRDYCEKKGWIVNITSQVQTERNINRAMTILQAVTTFAAVAGVVYVMYKLFAGHQGAYTGLPNKRPNVPTIRTAKVQGPGFDYAVAMAKRNILTATTSKGEFTMLGVHDNVAILPTHASPGETIVIDGKEIEVLDAKALEDQAGTNLEITIVTLKRNEKFRDIRPHIPAQITETNDGVLIVNTSKYPNMYVPVGAVTEQGYLNLGGRQTARTLMYNFPTRAGQCGGVITCTGKVIGMHVGGNGSHGFAAALKRSYFTQSQGEIQWMRPSKEVGYPIINAPSKTKLEPSAFHYVFEGVKEPAVLTKNDPRFKTGFEEAIFSKYVGNKITEVDEYMKEAVDHYAGQLMSLDINTEQMCLEDAMYGTDGLEALDLSTSAGYPYVTMGKKKRDILNKQTRDTKEMQRLLDTYGINLPLVTYVKDELRSKTKVEQGKSRLIEASSLNDSVAMRMAFGNLYAAFHKNPGVVTGSAVGCDPDLFWSKIPVLMEEKLFAFDYTGYDASLSPAWFEALKMVLEKIGFGDRVDYIDYLNHSHHLYKNKTYCVKGGMPSGCSGTSIFNSMINNLIIRTLLLKTYKGIDLDHLKMIAYGDDVIASYPHEVDASLLAQSGKDYGLTMTPADKSATFETVTWENVTFLKRFFRADERYPFLIHPVMPMKEIHESIRWTKDPRNTQDHVRSLCLLAWHNGEDEYNKFLAMIRSVPIGRALLLPEYSTLYRRWLDSF.

Residue glycine 2 is the site of N-myristoyl glycine; by host attachment. At 2-1517 (GAQVSSQKVG…NINRAMTILQ (1516 aa)) the chain is on the cytoplasmic side. Amphipathic alpha-helix stretches follow at residues 579–599 (GVDDLITEVAQNALALSLPKP) and 579–603 (GVDDLITEVAQNALALSLPKPQSNL). Catalysis depends on for protease 2A activity residues histidine 898 and aspartate 916. Positions 933 and 935 each coordinate Zn(2+). The active-site For protease 2A activity is cysteine 987. Zn(2+) is bound by residues cysteine 993 and histidine 995. The interval 1125–1197 (GDSWLKKFTE…HQSCPSQEHQ (73 aa)) is membrane-binding. The oligomerization stretch occupies residues 1125-1263 (GDSWLKKFTE…SPGTGKSVAT (139 aa)). The RNA-binding stretch occupies residues 1146–1150 (SNKIS). The region spanning 1229 to 1385 (EHTINNYIQF…SEYSRDGKLN (157 aa)) is the SF3 helicase domain. Position 1253–1260 (1253–1260 (GSPGTGKS)) interacts with ATP. Residues cysteine 1393, cysteine 1396, cysteine 1405, and cysteine 1410 each contribute to the Zn(2+) site. The segment at 1393–1410 (CKNCHQPANFKRCCPLVC) adopts a C4-type zinc-finger fold. Residues 1437 to 1444 (EKNRRSNI) are RNA-binding. Positions 1448-1453 (MEALFQ) are oligomerization. Residues 1518–1533 (AVTTFAAVAGVVYVMY) lie within the membrane without spanning it. At 1534-2206 (KLFAGHQGAY…TLYRRWLDSF (673 aa)) the chain is on the cytoplasmic side. Tyrosine 1543 is subject to O-(5'-phospho-RNA)-tyrosine. One can recognise a Peptidase C3 domain in the interval 1563-1741 (GPGFDYAVAM…FAAALKRSYF (179 aa)). Active-site for protease 3C activity residues include histidine 1602, glutamate 1633, and cysteine 1709. Residues 1972–2087 (EKLFAFDYTG…SYPHEVDASL (116 aa)) enclose the RdRp catalytic domain. Mg(2+) contacts are provided by aspartate 1978 and aspartate 2073.

The protein belongs to the picornaviruses polyprotein family. In terms of assembly, interacts with capsid protein VP1 and capsid protein VP3 to form heterotrimeric protomers. Interacts with capsid protein VP0, and capsid protein VP3 to form heterotrimeric protomers. Interacts with human PVR. Five protomers subsequently associate to form pentamers which serve as building blocks for the capsid. Interacts with capsid protein VP2, capsid protein VP3 and capsid protein VP4 following cleavage of capsid protein VP0. As to quaternary structure, interacts with capsid protein VP1 and capsid protein VP3 in the mature capsid. In terms of assembly, interacts with capsid protein VP0 and capsid protein VP1 to form heterotrimeric protomers. Five protomers subsequently associate to form pentamers which serve as building blocks for the capsid. Interacts with capsid protein VP4 in the mature capsid. Interacts with protein 2C; this interaction may be important for virion morphogenesis. Interacts with capsid protein VP1 and capsid protein VP3. As to quaternary structure, homodimer. In terms of assembly, homohexamer; forms a hexameric ring structure with 6-fold symmetry characteristic of AAA+ ATPases. Interacts (via N-terminus) with host RTN3 (via reticulon domain); this interaction is important for viral replication. Interacts with capsid protein VP3; this interaction may be important for virion morphogenesis. Interacts with protein 3CD. As to quaternary structure, homodimer. Interacts with host GBF1. Interacts (via GOLD domain) with host ACBD3 (via GOLD domain); this interaction allows the formation of a viral protein 3A/ACBD3 heterotetramer with a 2:2 stoichiometry, which will stimulate the recruitment of host PI4KB in order to synthesize PI4P at the viral RNA replication sites. In terms of assembly, interacts with RNA-directed RNA polymerase. Interacts with protein 3AB and with RNA-directed RNA polymerase. As to quaternary structure, interacts with Viral protein genome-linked and with protein 3CD. It depends on Mg(2+) as a cofactor. Specific enzymatic cleavages in vivo by the viral proteases yield processing intermediates and the mature proteins. In terms of processing, myristoylation is required for the formation of pentamers during virus assembly. Further assembly of 12 pentamers and a molecule of genomic RNA generates the provirion. Post-translationally, during virion maturation, immature virions are rendered infectious following cleavage of VP0 into VP4 and VP2. This maturation seems to be an autocatalytic event triggered by the presence of RNA in the capsid and it is followed by a conformational change infectious virion. Myristoylation is required during RNA encapsidation and formation of the mature virus particle. In terms of processing, VPg is uridylylated by the polymerase into VPg-pUpU. This acts as a nucleotide-peptide primer for the genomic RNA replication.

The protein localises to the virion. Its subcellular location is the host cytoplasm. The protein resides in the host cytoplasmic vesicle membrane. It localises to the host nucleus. It catalyses the reaction a ribonucleoside 5'-triphosphate + H2O = a ribonucleoside 5'-diphosphate + phosphate + H(+). The catalysed reaction is Selective cleavage of Tyr-|-Gly bond in the picornavirus polyprotein.. The enzyme catalyses RNA(n) + a ribonucleoside 5'-triphosphate = RNA(n+1) + diphosphate. It carries out the reaction Selective cleavage of Gln-|-Gly bond in the poliovirus polyprotein. In other picornavirus reactions Glu may be substituted for Gln, and Ser or Thr for Gly.. Its activity is regulated as follows. Replication or transcription is subject to high level of random mutations by the nucleotide analog ribavirin. Forms an icosahedral capsid of pseudo T=3 symmetry with capsid proteins VP2 and VP3. The capsid is 300 Angstroms in diameter, composed of 60 copies of each capsid protein and enclosing the viral positive strand RNA genome. Capsid protein VP1 mainly forms the vertices of the capsid. Capsid protein VP1 interacts with host cell receptor PVR to provide virion attachment to target host cells. This attachment induces virion internalization predominantly through clathrin- and caveolin-independent endocytosis in Hela cells and through caveolin-mediated endocytosis in brain microvascular endothelial cells. Tyrosine kinases are probably involved in the entry process. Virus binding to PVR induces increased junctional permeability and rearrangement of junctional proteins. Modulation of endothelial tight junctions, as well as cytolytic infection of endothelial cells themselves, may result in loss of endothelial integrity which may help the virus to reach the CNS. After binding to its receptor, the capsid undergoes conformational changes. Capsid protein VP1 N-terminus (that contains an amphipathic alpha-helix) and capsid protein VP4 are externalized. Together, they shape a pore in the host membrane through which viral genome is translocated to host cell cytoplasm. Its function is as follows. Forms an icosahedral capsid of pseudo T=3 symmetry with capsid proteins VP2 and VP3. The capsid is 300 Angstroms in diameter, composed of 60 copies of each capsid protein and enclosing the viral positive strand RNA genome. In terms of biological role, lies on the inner surface of the capsid shell. After binding to the host receptor, the capsid undergoes conformational changes. Capsid protein VP4 is released, Capsid protein VP1 N-terminus is externalized, and together, they shape a pore in the host membrane through which the viral genome is translocated into the host cell cytoplasm. Functionally, component of immature procapsids, which is cleaved into capsid proteins VP4 and VP2 after maturation. Allows the capsid to remain inactive before the maturation step. Cysteine protease that cleaves viral polyprotein and specific host proteins. It is responsible for the autocatalytic cleavage between the P1 and P2 regions, which is the first cleavage occurring in the polyprotein. Also cleaves the host translation initiation factor EIF4G1, in order to shut down the capped cellular mRNA translation. Inhibits the host nucleus-cytoplasm protein and RNA trafficking by cleaving host members of the nuclear pores including NUP98, NUP62 and NUP153. Counteracts stress granule formation probably by antagonizing its assembly or promoting its dissassembly. Cleaves and inhibits host IFIH1/MDA5, thereby inhibiting the type-I IFN production and the establishment of the antiviral state. Cleaves and inhibits host MAVS, thereby inhibiting the type-I IFN production and the establishment of the antiviral state. Its function is as follows. Plays an essential role in the virus replication cycle by acting as a viroporin. Creates a pore in the host endoplasmic reticulum and as a consequence releases Ca2+ in the cytoplasm of infected cell. In turn, high levels of cytoplasmic calcium may trigger membrane trafficking and transport of viral ER-associated proteins to viroplasms, sites of viral genome replication. In terms of biological role, induces and associates with structural rearrangements of intracellular membranes. Displays RNA-binding, nucleotide binding and NTPase activities. May play a role in virion morphogenesis and viral RNA encapsidation by interacting with the capsid protein VP3. Functionally, localizes the viral replication complex to the surface of membranous vesicles. Together with protein 3CD binds the Cis-Active RNA Element (CRE) which is involved in RNA synthesis initiation. Acts as a cofactor to stimulate the activity of 3D polymerase, maybe through a nucleid acid chaperone activity. Localizes the viral replication complex to the surface of membranous vesicles. It inhibits host cell endoplasmic reticulum-to-Golgi apparatus transport and causes the disassembly of the Golgi complex, possibly through GBF1 interaction. This would result in depletion of MHC, trail receptors and IFN receptors at the host cell surface. Plays an essential role in viral RNA replication by recruiting ACBD3 and PI4KB at the viral replication sites, thereby allowing the formation of the rearranged membranous structures where viral replication takes place. Its function is as follows. Acts as a primer for viral RNA replication and remains covalently bound to viral genomic RNA. VPg is uridylylated prior to priming replication into VPg-pUpU. The oriI viral genomic sequence may act as a template for this. The VPg-pUpU is then used as primer on the genomic RNA poly(A) by the RNA-dependent RNA polymerase to replicate the viral genome. During genome replication, the VPg-RNA linkage is removed by the host TDP2, thereby accelerating replication. During the late stage of the replication cycle, host TDP2 is excluded from sites of viral RNA synthesis and encapsidation, allowing for the generation of progeny virions. In terms of biological role, involved in the viral replication complex and viral polypeptide maturation. It exhibits protease activity with a specificity and catalytic efficiency that is different from protease 3C. Protein 3CD lacks polymerase activity. Protein 3CD binds to the 5'UTR of the viral genome. Functionally, major viral protease that mediates proteolytic processing of the polyprotein. Cleaves host EIF5B, contributing to host translation shutoff. Also cleaves host PABPC1, contributing to host translation shutoff. Cleaves host RIGI and thus contributes to the inhibition of type I interferon production. Cleaves host NLRP1, triggers host N-glycine-mediated degradation of the autoinhibitory NLRP1 N-terminal fragment. Inhibits the integrated stress response (ISR) in the infected cell by cleaving host G3BP1. Stress granule formation is thus inhibited, which allows protein synthesis and viral replication. Replicates the viral genomic RNA on the surface of intracellular membranes. May form linear arrays of subunits that propagate along a strong head-to-tail interaction called interface-I. Covalently attaches UMP to a tyrosine of VPg, which is used to prime RNA synthesis. The positive stranded RNA genome is first replicated at virus induced membranous vesicles, creating a dsRNA genomic replication form. This dsRNA is then used as template to synthesize positive stranded RNA genomes. ss(+)RNA genomes are either translated, replicated or encapsidated. This chain is Genome polyprotein, found in Poliovirus type 3 (strain 23127).